A 637-amino-acid polypeptide reads, in one-letter code: PTS system mannitol-specific EIICBA component (637 aa).

Over 1–23 the chain is Cytoplasmic; it reads MSSDIKIKVQSFGRFLSNMVMPN. Positions 12–341 constitute a PTS EIIC type-2 domain; it reads FGRFLSNMVM…ILLKTSKVKE (330 aa). The helical transmembrane segment at 24-45 threads the bilayer; that stretch reads IGAFIAWGIITALFIPTGWLPN. Residues 46–49 are Periplasmic-facing; it reads ETLA. Residues 50–70 form a helical membrane-spanning segment; sequence KLVGPMITYLLPLLIGYTGGK. Residues 71–133 lie on the Cytoplasmic side of the membrane; the sequence is LVGGERGGVV…SGFEMLVNNF (63 aa). A helical transmembrane segment spans residues 134–155; sequence SAGIIGMILAILAFLGIGPIVE. Topologically, residues 156–164 are periplasmic; the sequence is ALSKMLAAG. The chain crosses the membrane as a helical span at residues 165–185; sequence VNFMVVHDMLPLASIFVEPAK. Residues 186–272 lie on the Cytoplasmic side of the membrane; it reads ILFLNNAINH…VLMNPRLILA (87 aa). Residues 273-292 traverse the membrane as a helical segment; that stretch reads VILGGMTGVFTLTILGGGLV. The Periplasmic segment spans residues 293 to 312; it reads SPASPGSILAVLAMTPKGAY. A helical membrane pass occupies residues 313-334; sequence FANIAGVCAAMAVSFVVSAILL. At 335 to 637 the chain is on the cytoplasmic side; it reads KTSKVKEEDD…EVLELLAGRK (303 aa). Residues 378 to 473 form the PTS EIIB type-2 domain; sequence RKIIVACDAG…RLVAAQRHTA (96 aa). Cys384 (phosphocysteine intermediate; for EIIB activity) is an active-site residue. Position 384 is a phosphocysteine; by EIIA (Cys384). The 143-residue stretch at 494–636 folds into the PTS EIIA type-2 domain; the sequence is FKLGAENIFL…DEVLELLAGR (143 aa). The active-site Tele-phosphohistidine intermediate; for EIIA activity is the His554. A Phosphohistidine; by HPr modification is found at His554.

As to quaternary structure, homodimer. An intramolecular phosphotransfer takes places between His-554 and Cys-384.

It is found in the cell inner membrane. It carries out the reaction D-mannitol(out) + N(pros)-phospho-L-histidyl-[protein] = D-mannitol 1-phosphate(in) + L-histidyl-[protein]. Functionally, the phosphoenolpyruvate-dependent sugar phosphotransferase system (sugar PTS), a major carbohydrate active transport system, catalyzes the phosphorylation of incoming sugar substrates concomitantly with their translocation across the cell membrane. This system is involved in D-mannitol transport. Also able to use D-mannonic acid. This chain is PTS system mannitol-specific EIICBA component, found in Escherichia coli (strain K12).